We begin with the raw amino-acid sequence, 196 residues long: HTH-type transcriptional regulator EcpR (196 aa).

The HTH luxR-type domain occupies 138-196 (KDIKKDKITDREMEIIRMTAQGMLPKSIARIENCSVKTVYTHRRNAEAKLYSKIYKLVP). The segment at residues 162-181 (PKSIARIENCSVKTVYTHRR) is a DNA-binding region (H-T-H motif).

Belongs to the EcpR/MatA family.

The protein resides in the cytoplasm. Its function is as follows. Part of the ecpRABCDE operon, which encodes the E.coli common pilus (ECP). ECP is found in both commensal and pathogenic strains and plays a dual role in early-stage biofilm development and host cell recognition. Positively regulates the expression of the ecp operon. This is HTH-type transcriptional regulator EcpR (ecpR) from Escherichia coli O17:K52:H18 (strain UMN026 / ExPEC).